Consider the following 430-residue polypeptide: Serine--tRNA ligase (430 aa).

L-serine is bound at residue Thr235–Glu237. Residues Arg266–Glu268 and Val282 contribute to the ATP site. Glu289 serves as a coordination point for L-serine. Glu353–Ser356 lines the ATP pocket. Ser389 is an L-serine binding site.

This sequence belongs to the class-II aminoacyl-tRNA synthetase family. Type-1 seryl-tRNA synthetase subfamily. As to quaternary structure, homodimer. The tRNA molecule binds across the dimer.

The protein resides in the cytoplasm. It carries out the reaction tRNA(Ser) + L-serine + ATP = L-seryl-tRNA(Ser) + AMP + diphosphate + H(+). The enzyme catalyses tRNA(Sec) + L-serine + ATP = L-seryl-tRNA(Sec) + AMP + diphosphate + H(+). Its pathway is aminoacyl-tRNA biosynthesis; selenocysteinyl-tRNA(Sec) biosynthesis; L-seryl-tRNA(Sec) from L-serine and tRNA(Sec): step 1/1. Its function is as follows. Catalyzes the attachment of serine to tRNA(Ser). Is also able to aminoacylate tRNA(Sec) with serine, to form the misacylated tRNA L-seryl-tRNA(Sec), which will be further converted into selenocysteinyl-tRNA(Sec). The chain is Serine--tRNA ligase from Chlorobium phaeovibrioides (strain DSM 265 / 1930) (Prosthecochloris vibrioformis (strain DSM 265)).